The chain runs to 2408 residues: Protein ELYS (2408 aa).

Residues Met1–Gly492 form a seven-bladed beta propeller repeats region. The segment at Tyr1016–Arg2408 is disordered. Positions Pro1124 to Ser1145 are enriched in polar residues. Positions Asn1457–Glu1466 are enriched in acidic residues. Polar residues-rich tracts occupy residues Ile1705–Leu1719 and Pro1735–Thr1750. Over residues Gln2136 to Arg2149 the composition is skewed to basic and acidic residues. 2 sufficient for chromatin-binding regions span residues Ser2281 to Ile2359 and Ile2359 to Arg2408. The tract at residues Ser2281 to Arg2408 is sufficient to block nuclear pore assembly. A DNA-binding region (a.T hook) is located at residues Ser2329 to Lys2341. Residues Pro2331 to Lys2348 show a composition bias toward basic residues. Over residues Asp2378 to Ser2389 the composition is skewed to basic and acidic residues.

Belongs to the ELYS family. As to quaternary structure, interacts with the Nup107-160 subcomplex of the NPC.

The protein localises to the nucleus. The protein resides in the nuclear pore complex. Its subcellular location is the cytoplasm. It localises to the nucleoplasm. In terms of biological role, required for the assembly of a functional nuclear pore complex (NPC) on the surface of chromosomes as nuclei form at the end of mitosis. May initiate NPC assembly by binding to chromatin and recruiting the Nup107-160 subcomplex, which may in turn recruit membrane vesicles containing pom121 and tmem48/ndc1. Association with chromatin may require the presence of the mcm2-mcm7 complex, suggesting a mechanism for coordination of nuclear assembly and the inactivation of replication licensing. The polypeptide is Protein ELYS (ahctf1) (Xenopus laevis (African clawed frog)).